The sequence spans 94 residues: Cell division protein FtsB (94 aa).

At 1 to 8 (MRLRSPYW) the chain is on the cytoplasmic side. The chain crosses the membrane as a helical span at residues 9–26 (LFVVLILALAGLQYRLWV). Residues 27–94 (GDGSLAQVRD…DGETLYQLAK (68 aa)) are Periplasmic-facing. Residues 31-78 (LAQVRDLQKQIADQHGENERLLERNRILEAEVAELKKGTETVEERARH) adopt a coiled-coil conformation.

Belongs to the FtsB family. In terms of assembly, part of a complex composed of FtsB, FtsL and FtsQ.

Its subcellular location is the cell inner membrane. Its function is as follows. Essential cell division protein. May link together the upstream cell division proteins, which are predominantly cytoplasmic, with the downstream cell division proteins, which are predominantly periplasmic. In Pseudomonas aeruginosa (strain ATCC 15692 / DSM 22644 / CIP 104116 / JCM 14847 / LMG 12228 / 1C / PRS 101 / PAO1), this protein is Cell division protein FtsB.